Reading from the N-terminus, the 491-residue chain is UDP-N-acetylmuramate--L-alanine ligase (491 aa).

126-132 (GTHGKTT) contacts ATP.

Belongs to the MurCDEF family.

It is found in the cytoplasm. It catalyses the reaction UDP-N-acetyl-alpha-D-muramate + L-alanine + ATP = UDP-N-acetyl-alpha-D-muramoyl-L-alanine + ADP + phosphate + H(+). The protein operates within cell wall biogenesis; peptidoglycan biosynthesis. Cell wall formation. The chain is UDP-N-acetylmuramate--L-alanine ligase from Klebsiella pneumoniae (strain 342).